We begin with the raw amino-acid sequence, 587 residues long: Chaperonin CPN60, mitochondrial (587 aa).

The transit peptide at 1-32 (MYRLISSIASKARVARNCTSQIGSRLSSTRNY) directs the protein to the mitochondrion.

It belongs to the chaperonin (HSP60) family.

It localises to the mitochondrion. Functionally, implicated in mitochondrial protein import and macromolecular assembly. May facilitate the correct folding of imported proteins. May also prevent misfolding and promote the refolding and proper assembly of unfolded polypeptides generated under stress conditions in the mitochondrial matrix. This chain is Chaperonin CPN60, mitochondrial, found in Brassica napus (Rape).